A 323-amino-acid polypeptide reads, in one-letter code: Methenyltetrahydromethanopterin cyclohydrolase (323 aa).

Belongs to the MCH family.

It localises to the cytoplasm. It carries out the reaction 5,10-methenyl-5,6,7,8-tetrahydromethanopterin + H2O = N(5)-formyl-5,6,7,8-tetrahydromethanopterin + H(+). It participates in one-carbon metabolism; methanogenesis from CO(2); 5,10-methenyl-5,6,7,8-tetrahydromethanopterin from CO(2): step 3/3. In terms of biological role, catalyzes the reversible interconversion of 5-formyl-H(4)MPT to methenyl-H(4)MPT(+). The protein is Methenyltetrahydromethanopterin cyclohydrolase of Methanococcus maripaludis (strain DSM 14266 / JCM 13030 / NBRC 101832 / S2 / LL).